A 1275-amino-acid chain; its full sequence is MWQKWADVTQGHVAAPGPGDFAQMVAVLRKVLEERQPCAPEQCDERSALEGALRLATEHLHRALPDGGQGMSSLQEAARLADPAAFSIPASHRARGGTLVTSAKRAFVNGLEPFHVEMLRPQGNFNRALVRVLEYLTVHRALGLRDDVSSWAVAQLEPLAVPTRWVVGSHRGRVAGALVGFAKRGYLYTLGPVLEAVLQGQARWNLAMVEAIRAAAGAQAPGEAEARRHVADVEALREPLAGRTLPGALRVTQPLWGEVLRRQSRFNAESVLALANLLGTRTAPPQPPSLADYPAWCAAREPARVTAAQEAVARLSRRPLISLVTPVHDASEAFLRECLASVSSQVYADWEWLLVDDASTAPHLARILREAAERESRIRVLTASSEGDTARATNEGFAACRGDFVGFLGAEDTLSPHALAEVALAFLAQPELALLYTDEDGLDAQGHRSAPFFKPDWSPDLLRSVDYVRHFLVVRRETLAQVGGLREGFDGAQGHDLMLRLSEATSSIGHITEPLYHAREGSAASASRGAGLDTATKAGVRALSEHLARQGESAEVTSPAPIQYRVRYPVRGTPKVSIIVPFKDRPDLLRTLVDSLLAQTRYPHFEVLLVSNNSTRPETFALLEQWVDPRLVKLTWDHPFNYPAINNWAAKQASGELLLFLNNDMEVVDPSWLDELVSQAQRPEVGAVGCKLLFPEGTVQHAGVVVGMTGFAGHPFWRLPEGPISTPFGHTEWTRNWLSVTSACVILRREVFESLGGFDERFQVCGSDVELGLRLNAQGLRVVCTAQTRLIHHESASRRADAIPEADYWLSYAAYRPWLGPKGDPYYNPHLTLTATDCGLRRHPEDGEQLAVRTLGRDVPSARDVRGEQRARAQRHLIEHLEAWDFTPEQAQTSRESAPAALAALRAKGRVETATWFVPAFGHVYAGIHTIFRFADLMQRRHGVRSDFVIYDQPNVRPGDIEARVAAICPGAVGAVRVLRRPEDVALLPACDLALATAWTSAYRVLHHPRAGLRGYFVQDYEPLFHAAGTPSALAEQTYGLGFYGIFNTPGLYEHVVGLHGMEGAWFEPAVDGTLFHPRRPPRQGPVRVFFYGRPGNERNGFELGLAALAQLKRELGPAVEVLAAGAEWDPEAYGVRGLVTNLGMLPAERTGALYRECDVGLCFMFTRHPSYLPLEMMACGVTVVTNDNPTNRWLLTHGENCLLAEPTPSGVLARLRDAVSNGALRARLGTNAAERVSRTSWEAEVDRVMKGLLNTGAHPAATLDDRASSLEHAS.

Functionally, involved in O-antigen biosynthesis. The polypeptide is O-antigen biosynthesis protein RfbC (rfbC) (Myxococcus xanthus).